The primary structure comprises 477 residues: Exodeoxyribonuclease 7 large subunit (477 aa).

Residues 456-477 (GGTVAPRKAPPKKPGGGQGSLL) form a disordered region.

It belongs to the XseA family. As to quaternary structure, heterooligomer composed of large and small subunits.

It is found in the cytoplasm. The catalysed reaction is Exonucleolytic cleavage in either 5'- to 3'- or 3'- to 5'-direction to yield nucleoside 5'-phosphates.. In terms of biological role, bidirectionally degrades single-stranded DNA into large acid-insoluble oligonucleotides, which are then degraded further into small acid-soluble oligonucleotides. In Parvibaculum lavamentivorans (strain DS-1 / DSM 13023 / NCIMB 13966), this protein is Exodeoxyribonuclease 7 large subunit.